We begin with the raw amino-acid sequence, 785 residues long: Conidiophore development regulator abaA (785 aa).

The segment at 1–22 is disordered; that stretch reads MAEWQTECMLPPTQPGFEGVGP. The TEA DNA-binding region spans 130 to 204; that stretch reads GKDGEPVWSD…QVLDSFLKGD (75 aa). Positions 213–232 are disordered; sequence EQPADRSNGQPPSAGPRWRN.

Belongs to the TEC1 family.

Its subcellular location is the nucleus. Functionally, brlA, abaA and wetA are pivotal regulators of conidiophore development and conidium maturation. They act individually and together to regulate their own expression and that of numerous other sporulation-specific genes. Binds to the sequence 5'-CATTCY-3', where Y is a pyrimidine, making both major- and minor-groove contacts. Controls expression of wetA. This Aspergillus oryzae (strain ATCC 42149 / RIB 40) (Yellow koji mold) protein is Conidiophore development regulator abaA.